Here is a 471-residue protein sequence, read N- to C-terminus: Glutamine synthetase (471 aa).

The 86-residue stretch at 14–99 (QKIQMIDLKF…ICSIKEPRTG (86 aa)) folds into the GS beta-grasp domain. Residues 106–471 (PRVIAQKAID…PYEFYLYYDC (366 aa)) enclose the GS catalytic domain. Mg(2+) contacts are provided by Glu-131 and Glu-133. Glu-208 contacts ATP. The Mg(2+) site is built by Glu-213 and Glu-221. Residues 265-266 (NG) and Gly-266 contribute to the L-glutamate site. Position 270 (His-270) interacts with Mg(2+). Residues 272-274 (HQS) and Ser-274 contribute to the ATP site. L-glutamate is bound by residues Arg-322, Glu-328, and Arg-340. 3 residues coordinate ATP: Arg-340, Arg-345, and Lys-354. Glu-359 is a binding site for Mg(2+). Arg-361 contacts L-glutamate. An O-AMP-tyrosine modification is found at Tyr-399.

It belongs to the glutamine synthetase family. In terms of assembly, oligomer of 12 subunits arranged in the form of two hexagons. Mg(2+) serves as cofactor.

Its subcellular location is the cytoplasm. The enzyme catalyses L-glutamate + NH4(+) + ATP = L-glutamine + ADP + phosphate + H(+). With respect to regulation, the activity of this enzyme could be controlled by adenylation under conditions of abundant glutamine. Its function is as follows. Involved in nitrogen metabolism via ammonium assimilation. Catalyzes the ATP-dependent biosynthesis of glutamine from glutamate and ammonia. This is Glutamine synthetase from Microchaete diplosiphon (Fremyella diplosiphon).